The primary structure comprises 1140 residues: TBC1 domain family member 8 (1140 aa).

GRAM domains follow at residues 145–212 and 285–353; these read VKFE…ERTS and EFFR…EKME. Positions 505 to 692 constitute a Rab-GAP TBC domain; that stretch reads GIPESLRGRL…NVVDCFFYDG (188 aa). Residues 1031-1070 are disordered; it reads GQRGSSSGSCSQECGEELRASAPSPEDSVFADTGKTPQDS. Residues 1032–1043 are compositionally biased toward low complexity; that stretch reads QRGSSSGSCSQE.

Its function is as follows. May act as a GTPase-activating protein for Rab family protein(s). The protein is TBC1 domain family member 8 (TBC1D8) of Homo sapiens (Human).